Here is an 884-residue protein sequence, read N- to C-terminus: Chondroitin sulfate synthase 3 (884 aa).

At 1 to 7 the chain is on the cytoplasmic side; that stretch reads MAVRSRR. Residues 8 to 28 form a helical; Signal-anchor for type II membrane protein membrane-spanning segment; sequence PWVSVALGLVLGFTAASWLIA. Over 29-884 the chain is Lumenal; it reads PRVAELSEKR…LGVRDNRTLS (856 aa). A disordered region spans residues 47 to 164; it reads YYGRSATGPR…NGSGDGGAAV (118 aa). 2 stretches are compositionally biased toward low complexity: residues 60-69 and 84-96; these read QQLLPQPQSR and PGPQQPEAAPGGP. Residues Asn-155 and Asn-281 are each glycosylated (N-linked (GlcNAc...) asparagine). Residues 437–456 are disordered; sequence SNSEVSKEDQQLGRTPSFNH. N-linked (GlcNAc...) asparagine glycosylation is present at Asn-712. Positions 722 and 836 each coordinate a divalent metal cation. N-linked (GlcNAc...) asparagine glycosylation occurs at Asn-880.

The protein belongs to the chondroitin N-acetylgalactosaminyltransferase family. The cofactor is Co(2+). It depends on Mn(2+) as a cofactor. Requires Cd(2+) as cofactor.

It is found in the golgi apparatus. It localises to the golgi stack membrane. It catalyses the reaction 3-O-(beta-D-GlcA-(1-&gt;3)-beta-D-GalNAc-(1-&gt;4)-beta-D-GlcA-(1-&gt;3)-beta-D-Gal-(1-&gt;3)-beta-D-Gal-(1-&gt;4)-beta-D-Xyl)-L-seryl-[protein] + UDP-N-acetyl-alpha-D-galactosamine = 3-O-(beta-D-GalNAc-(1-&gt;4)-beta-D-GlcA-(1-&gt;3)-beta-D-GalNAc-(1-&gt;4)-beta-D-GlcA-(1-&gt;3)-beta-D-Gal-(1-&gt;3)-beta-D-Gal-(1-&gt;4)-beta-D-Xyl)-L-seryl-[protein] + UDP + H(+). It carries out the reaction 3-O-{beta-D-GlcA-(1-&gt;3)-[beta-D-GalNAc-(1-&gt;4)-beta-D-GlcA-(1-&gt;3)](n)-beta-D-GalNAc-(1-&gt;4)-beta-D-GlcA-(1-&gt;3)-beta-D-Gal-(1-&gt;3)-beta-D-Gal-(1-&gt;4)-beta-D-Xyl}-L-seryl-[protein] + UDP-N-acetyl-alpha-D-galactosamine = 3-O-{[beta-D-GalNAc-(1-&gt;4)-beta-D-GlcA-(1-&gt;3)](n+1)-beta-D-GalNAc-(1-&gt;4)-beta-D-GlcA-(1-&gt;3)-beta-D-Gal-(1-&gt;3)-beta-D-Gal-(1-&gt;4)-beta-D-Xyl}-L-seryl-[protein] + UDP + H(+). The enzyme catalyses 3-O-(beta-D-GalNAc-(1-&gt;4)-beta-D-GlcA-(1-&gt;3)-beta-D-Gal-(1-&gt;3)-beta-D-Gal-(1-&gt;4)-beta-D-Xyl)-L-seryl-[protein] + UDP-alpha-D-glucuronate = 3-O-(beta-D-GlcA-(1-&gt;3)-beta-D-GalNAc-(1-&gt;4)-beta-D-GlcA-(1-&gt;3)-beta-D-Gal-(1-&gt;3)-beta-D-Gal-(1-&gt;4)-beta-D-Xyl)-L-seryl-[protein] + UDP + H(+). The catalysed reaction is 3-O-{[beta-D-GalNAc-(1-&gt;4)-beta-D-GlcA-(1-&gt;3)](n)-beta-D-GalNAc-(1-&gt;4)-beta-D-GlcA-(1-&gt;3)-beta-D-Gal-(1-&gt;3)-beta-D-Gal-(1-&gt;4)-beta-D-Xyl}-L-seryl-[protein] + UDP-alpha-D-glucuronate = 3-O-{beta-D-GlcA-(1-&gt;3)-[beta-D-GalNAc-(1-&gt;4)-beta-D-GlcA-(1-&gt;3)](n)-beta-D-GalNAc-(1-&gt;4)-beta-D-GlcA-(1-&gt;3)-beta-D-Gal-(1-&gt;3)-beta-D-Gal-(1-&gt;4)-beta-D-Xyl}-L-seryl-[protein] + UDP + H(+). Its function is as follows. Has both beta-1,3-glucuronic acid and beta-1,4-N-acetylgalactosamine transferase activity. Transfers glucuronic acid (GlcUA) from UDP-GlcUA and N-acetylgalactosamine (GalNAc) from UDP-GalNAc to the non-reducing end of the elongating chondroitin polymer. Specific activity is much reduced compared to CHSY1. The sequence is that of Chondroitin sulfate synthase 3 (Chsy3) from Mus musculus (Mouse).